The chain runs to 196 residues: Sesquiterpene phosphatase astK (196 aa).

It belongs to the HAD-like hydrolase superfamily.

It catalyses the reaction (S,S)-drim-8-en-11-yl phosphate + H2O = (S,S)-drim-8-en-11-ol + phosphate. It participates in secondary metabolite biosynthesis; terpenoid biosynthesis. Its function is as follows. Sesquiterpene phosphatase; part of the gene cluster that mediates the biosynthesis of astellolides, drimane-type sesquiterpene esters that show antimicrobial, anti-inflammatory, and anti-tumor activities. The first step in astellolide biosynthesis is performed by the sesquiterpene cyclase astC that catalyzes the formation of drimanyl pyrophosphate from farnesyl pyrophosphate. Drimanyl pyrophosphate is then dephosphorylated by the sesquiterpene phosphatase astI to produce drimanyl monophosphate which is further dephosphorylated to drim-8-ene-11-ol by atsK. Drim-8-ene-11-ol is converted to confertifolin, probably by the cytochrome P450 monooxygenase astD and/or the dehydrogenase astE. The cytochrome P450 monooxygenases astB, astF and astJ then hydroxylate confertifolin at C6, C14, or C15 to form trihydroxy confertifolin. The nonribosomal peptide synthetase astA catalyzes ester bond formation between trihydroxy contifolin and benzoic acid (BA) or 4-hydroxy benzoic acid (4HBA), leading to the formation of dideacetyl astellolides A and B, respectively. Finally, the O-acetyltransferase astG converts dideacetyl astellolides A and B into deacetyl astellolides A and B. The chain is Sesquiterpene phosphatase astK from Aspergillus oryzae (strain ATCC 42149 / RIB 40) (Yellow koji mold).